The primary structure comprises 683 residues: Dixin (683 aa).

The N-myristoyl glycine moiety is linked to residue Leu-2. The region spanning 20 to 127 is the Calponin-homology (CH) domain; that stretch reads EQQLQAYVAW…LVLALAAHFK (108 aa). The actin-binding stretch occupies residues 127–300; the sequence is KPGSSRTVNQ…LEKEMEEAKK (174 aa). Ser-186 is subject to Phosphoserine. Residues 207-235 form a disordered region; that stretch reads GQQRSPSESSCSSLTSPSPIHSAKSESII. Low complexity predominate over residues 211–228; the sequence is SPSESSCSSLTSPSPIHS. The residue at position 231 (Ser-231) is a Phosphoserine. The stretch at 279–452 forms a coiled coil; that stretch reads SWEEQLLEQQ…EALRKLSDVS (174 aa). Residues 482-492 show a composition bias toward polar residues; it reads NYNSHNSQSNG. 2 disordered regions span residues 482-509 and 556-594; these read NYNS…SNRG and TQKK…QSSP. Position 590 is a phosphoserine (Ser-590). The DIX domain maps to 600–680; that stretch reads CTKVLYFTDR…KIVAWVEEDH (81 aa).

Belongs to the DIXDC1 family. Isoform 1 but not isoform 2 binds filamentous actin. Interacts with the complex composed of DVL2 and Rac. Interacts with AXIN1; competes with MAP3K1. Interacts with MAP3K4 preventing MAP3K4 interaction with AXIN1. Directly interacts (via DIX domain) with DVL2 (via DIX domain). Interacts with gamma-tubulin. Post-translationally, phosphorylated on tyrosine and serine residues. Polyubiquitinated, leading to its proteasomal degradation. WNT3A signaling increases DIXDC1 protein levels by inhibiting its ubiquitination and subsequent degradation. As to expression, ubiquitously expressed with higher expression in cardiac and skeletal muscles.

It localises to the cell junction. It is found in the focal adhesion. The protein localises to the cytoplasm. Its subcellular location is the cytoskeleton. The protein resides in the stress fiber. Positive effector of the Wnt signaling pathway; activates WNT3A signaling via DVL2. Regulates JNK activation by AXIN1 and DVL2. This Homo sapiens (Human) protein is Dixin (DIXDC1).